The following is a 953-amino-acid chain: Coatomer subunit beta (953 aa).

Thr2 carries the post-translational modification N-acetylthreonine. HEAT repeat units follow at residues 96-131 (HEMI…KEAE), 132-168 (LLEP…NFEH), 240-276 (SERA…SAPT), 277-314 (AIKA…HPAH), 316-353 (RVLQ…SRNV), and 396-433 (DMAA…RFDN). At Lys494 the chain carries N6-acetyllysine.

In terms of assembly, oligomeric complex that consists of at least the alpha, beta, beta', gamma, delta, epsilon and zeta subunits. Interacts with SCYL1. Interacts with COPG1. Interacts (via trunk domain) with ARF1 (via switch I region); the interaction is direct. Interacts with KCNK2/TREK (via N-terminus); this interaction increases the channel-mediated whole cell currents and promotes plasma membrane expression of KCNK2/TREK. Interacts with anthrax lethal factor (LF); this interaction may facilitate endosomal vesicle membrane translocation of LF and its release from the lumen of endosomal vesicles to external milieu. Interacts with CAPN8 and PRKCE. Interacts with ARF1 (myristoylated); this interaction is required for binding of COPB1 to Golgi membranes. Interacts with STX17. Interacts with TMEM115. Interacts with HLA-G-B2M complex; this interaction mediates the endoplasmic reticulum (ER) retrieval of HLA-E-B2M complexes that bind low affinity peptides. Interacts with TMEM41B. As to quaternary structure, (Microbial infection) Interacts (via C-terminus) with HIV-1 Nef; the interaction is direct. In terms of processing, proteolytically cleaved between Ser-528 and Ser-529 by CAPN8.

The protein localises to the cytoplasm. Its subcellular location is the golgi apparatus membrane. It is found in the cytoplasmic vesicle. It localises to the COPI-coated vesicle membrane. The protein resides in the cell membrane. The protein localises to the endoplasmic reticulum-Golgi intermediate compartment. The coatomer is a cytosolic protein complex that binds to dilysine motifs and reversibly associates with Golgi non-clathrin-coated vesicles, which further mediate biosynthetic protein transport from the ER, via the Golgi up to the trans Golgi network. Coatomer complex is required for budding from Golgi membranes, and is essential for the retrograde Golgi-to-ER transport of dilysine-tagged proteins. In mammals, the coatomer can only be recruited by membranes associated to ADP-ribosylation factors (ARFs), which are small GTP-binding proteins; the complex also influences the Golgi structural integrity, as well as the processing, activity, and endocytic recycling of LDL receptors. Plays a functional role in facilitating the transport of kappa-type opioid receptor mRNAs into axons and enhances translation of these proteins. Required for limiting lipid storage in lipid droplets. Involved in lipid homeostasis by regulating the presence of perilipin family members PLIN2 and PLIN3 at the lipid droplet surface and promoting the association of adipocyte surface triglyceride lipase (PNPLA2) with the lipid droplet to mediate lipolysis. Involved in the Golgi disassembly and reassembly processes during cell cycle. Involved in autophagy by playing a role in early endosome function. Plays a role in organellar compartmentalization of secretory compartments including endoplasmic reticulum (ER)-Golgi intermediate compartment (ERGIC), Golgi, trans-Golgi network (TGN) and recycling endosomes, and in biosynthetic transport of CAV1. Promotes degradation of Nef cellular targets CD4 and MHC class I antigens by facilitating their trafficking to degradative compartments. This is Coatomer subunit beta from Homo sapiens (Human).